The following is a 278-amino-acid chain: Protein canopy homolog 3 (278 aa).

The first 30 residues, 1 to 30, serve as a signal peptide directing secretion; that stretch reads MDSMPEPASRCLLLLPLLLLLLLLLPAPEL. The Saposin B-type domain occupies 47–271; it reads SKCEVCKYVA…EGIQKASPLT (225 aa). Cystine bridges form between Cys-49–Cys-206, Cys-52–Cys-194, and Cys-104–Cys-166. N-linked (GlcNAc...) asparagine glycosylation is present at Asn-153. The stretch at 153-179 forms a coiled coil; it reads NETSAEVADLKKQCDVLVEEFEEVIED. A disordered region spans residues 215–278; the sequence is KGDTAALGGK…PLTHSPPDEL (64 aa). Residues 233–243 show a composition bias toward low complexity; the sequence is AKAAGGRSSSS.

It belongs to the canopy family. In terms of assembly, interacts with HSP90B1; this interaction is disrupted in the presence of ATP. Interacts with TLR1, TLR2, TLR4 and TLR9. Strongest interaction with TLR4.

The protein resides in the endoplasmic reticulum. Its function is as follows. Toll-like receptor (TLR)-specific co-chaperone for HSP90B1. Required for proper TLR folding, except that of TLR3, and hence controls TLR exit from the endoplasmic reticulum. Consequently, required for both innate and adaptive immune responses. In Homo sapiens (Human), this protein is Protein canopy homolog 3 (CNPY3).